The chain runs to 250 residues: 3-deoxy-manno-octulosonate cytidylyltransferase (250 aa).

It belongs to the KdsB family.

The protein resides in the cytoplasm. The catalysed reaction is 3-deoxy-alpha-D-manno-oct-2-ulosonate + CTP = CMP-3-deoxy-beta-D-manno-octulosonate + diphosphate. Its pathway is nucleotide-sugar biosynthesis; CMP-3-deoxy-D-manno-octulosonate biosynthesis; CMP-3-deoxy-D-manno-octulosonate from 3-deoxy-D-manno-octulosonate and CTP: step 1/1. It participates in bacterial outer membrane biogenesis; lipopolysaccharide biosynthesis. Functionally, activates KDO (a required 8-carbon sugar) for incorporation into bacterial lipopolysaccharide in Gram-negative bacteria. The protein is 3-deoxy-manno-octulosonate cytidylyltransferase of Rhizobium meliloti (strain 1021) (Ensifer meliloti).